We begin with the raw amino-acid sequence, 351 residues long: Probable E3 ubiquitin-protein ligase sinah (351 aa).

A disordered region spans residues 1-38 (MSVRNSRPQLSWPERVSPQRTIDTPTASGEMLTRRQSA). Residues 18–27 (PQRTIDTPTA) show a composition bias toward polar residues. The RING-type zinc finger occupies 106-141 (CPVCFGYIMPPIMQCPRGHLICSTCRSKLTICPVCR). The SBD stretch occupies residues 155 to 346 (VASKLIFPCK…LALNVVIRKV (192 aa)). The SIAH-type zinc-finger motif lies at 158–218 (KLIFPCKHSH…VYQHLMSSHE (61 aa)). Zn(2+)-binding residues include Cys163, Cys170, His182, Cys186, Cys193, Cys200, His212, and His217.

This sequence belongs to the SINA (Seven in absentia) family. As to quaternary structure, interacts with ebi and phyl.

The enzyme catalyses S-ubiquitinyl-[E2 ubiquitin-conjugating enzyme]-L-cysteine + [acceptor protein]-L-lysine = [E2 ubiquitin-conjugating enzyme]-L-cysteine + N(6)-ubiquitinyl-[acceptor protein]-L-lysine.. The protein operates within protein modification; protein ubiquitination. E3 ubiquitin-protein ligase that mediates ubiquitination and subsequent proteasomal degradation of target proteins. The adapter phyl is required to direct the degradation of the two isoforms of the transcriptional repressor Tramtrack (Ttk). E3 ubiquitin ligases accept ubiquitin from an E2 ubiquitin-conjugating enzyme in the form of a thioester and then directly transfers the ubiquitin to targeted substrates. It probably triggers the ubiquitin-mediated degradation of different substrates. A phyl-independent mechanism of degradation exists for isoform beta of ttk that involves motifs in the C-terminus of ttk. This is Probable E3 ubiquitin-protein ligase sinah (sinah) from Drosophila melanogaster (Fruit fly).